Reading from the N-terminus, the 534-residue chain is Ankyrin repeat and LEM domain-containing protein 1 (534 aa).

ANK repeat units follow at residues 4-35, 39-71, 75-104, and 108-137; these read TACLALRLLAALREEEARAVEELLRLGADPNL, DGAAAVHLAARASHPRALHCLRMLLRWGADPNA, EGLTPVHVAAAWGCCGALELLLSRGGDPTL, and DGLRPLDWALQQRHHNCARVLQELDTPTQP. The LEM domain maps to 279-323; the sequence is HSSVPPMSDLQLLQALRALGYSPGPVTPFTRGHYLRRLQEAQASR. In terms of domain architecture, GIY-YIG spans 370-485; it reads KSSFTYLLLD…ALGLQTLTNQ (116 aa). Positions 498-505 match the Nuclear localization signal motif; it reads PPSRRRRL.

In terms of assembly, interacts (via LEM domain) with BANF1; the interaction may favor BANF1 dimerization. In terms of tissue distribution, predominantly expressed in bone marrow, spleen, thymus, colon and ovary. Expressed also to a lesser extent in lymph nodes, liver and testis.

The protein resides in the cytoplasm. It localises to the nucleus. Its function is as follows. Endonuclease that probably plays a role in the DNA damage response and DNA repair. The sequence is that of Ankyrin repeat and LEM domain-containing protein 1 from Mus musculus (Mouse).